A 238-amino-acid chain; its full sequence is Ciliary microtubule associated protein 1B (238 aa).

The STPGR repeat unit spans residues 182-207 (PGPCAYHVVNPMIYKTRAPQFTMLGR). The disordered stretch occupies residues 206–238 (GRTLPPRENTKKPGPASYSVDKVVWSRGSRGRG).

This sequence belongs to the CIMAP family.

The protein localises to the cell projection. It localises to the cilium. The protein resides in the flagellum. The chain is Ciliary microtubule associated protein 1B (Cimap1b) from Mus musculus (Mouse).